We begin with the raw amino-acid sequence, 212 residues long: Small ribosomal subunit protein uS3 (212 aa).

Positions 39–108 (IKNYIKERYK…EITISVVEVR (70 aa)) constitute a KH type-2 domain.

This sequence belongs to the universal ribosomal protein uS3 family. As to quaternary structure, part of the 30S ribosomal subunit. Forms a tight complex with proteins S10 and S14.

Binds the lower part of the 30S subunit head. Binds mRNA in the 70S ribosome, positioning it for translation. The polypeptide is Small ribosomal subunit protein uS3 (Aquifex aeolicus (strain VF5)).